Reading from the N-terminus, the 525-residue chain is Calcium uptake protein 1 homolog, mitochondrial (525 aa).

Residues 109-146 form a disordered region; it reads ADAGQRPSSAADVNGEDKSSESESEDSEDEEAGSDLHL. Over residues 130–141 the composition is skewed to acidic residues; the sequence is SESEDSEDEEAG. EF-hand domains are found at residues 268-303 and 459-494; these read ISRR…VRQQ and LSDH…RVQR. Asp281, Asn283, Asp285, Asp287, Glu292, Asp472, Asn474, Asp476, Gln478, and Glu483 together coordinate Ca(2+).

Belongs to the MICU1 family. MICU1 subfamily.

It is found in the mitochondrion intermembrane space. The protein resides in the mitochondrion inner membrane. In terms of biological role, calcium sensor of the mitochondrial calcium uniporter (MCU) channel, which senses calcium level via its EF-hand domains. At low calcium levels, MICU1 occludes the pore of the MCU channel, preventing mitochondrial calcium uptake. At higher calcium levels, calcium-binding to MICU1 induces a conformational change that weakens MCU-MICU1 interactions and moves MICU1 away from the pore, allowing calcium permeation through the MCU channel. Also required to protect against manganese toxicity by preventing manganese uptake by MCU. During development, required in alpha/beta or gamma mushroom body neurons to support olfactory intermediate-term memory in the adult. The sequence is that of Calcium uptake protein 1 homolog, mitochondrial from Drosophila melanogaster (Fruit fly).